The chain runs to 1612 residues: DNA topoisomerase 2-beta (1612 aa).

N-acetylalanine is present on Ala2. The residue at position 3 (Lys3) is an N6-acetyllysine. Glycyl lysine isopeptide (Lys-Gly) (interchain with G-Cter in SUMO2) cross-links involve residues Lys21 and Lys22. ATP is bound by residues Asn100, Asn129, and 157 to 159 (SSN). Glycyl lysine isopeptide (Lys-Gly) (interchain with G-Cter in SUMO2) cross-links involve residues Lys165 and Lys166. Position 170-177 (170-177 (GRNGYGAK)) interacts with ATP. Glycyl lysine isopeptide (Lys-Gly) (interchain with G-Cter in SUMO2) cross-links involve residues Lys216 and Lys287. The interaction with DNA stretch occupies residues 351-353 (KKK). Residues Lys355 and Lys361 each participate in a glycyl lysine isopeptide (Lys-Gly) (interchain with G-Cter in SUMO2) cross-link. 385–387 (QTK) is a binding site for ATP. Residues Lys425, Lys427, and Lys434 each participate in a glycyl lysine isopeptide (Lys-Gly) (interchain with G-Cter in SUMO2) cross-link. The Toprim domain maps to 464–581 (CTLILTEGDS…SLLKHGFLEE (118 aa)). 3 residues coordinate Mg(2+): Glu470, Asp550, and Asp552. Glycyl lysine isopeptide (Lys-Gly) (interchain with G-Cter in SUMO2) cross-links involve residues Lys588, Lys593, Lys623, Lys631, Lys634, Lys664, and Lys700. The 454-residue stretch at 724–1177 (IPSLVDGFKP…SPSDLWKEDL (454 aa)) folds into the Topo IIA-type catalytic domain. Tyr814 (O-(5'-phospho-DNA)-tyrosine intermediate) is an active-site residue. The tract at residues 999 to 1008 (KLQTTLTCNS) is interaction with DNA. A Glycyl lysine isopeptide (Lys-Gly) (interchain with G-Cter in SUMO2) cross-link involves residue Lys1080. Positions 1098–1128 (AWKEAQEKAAEEEDTQNQHDDSSSDSGTPSG) are disordered. Residues Lys1202, Lys1205, Lys1214, and Lys1215 each participate in a glycyl lysine isopeptide (Lys-Gly) (interchain with G-Cter in SUMO2) cross-link. At Ser1224 the chain carries Phosphoserine. Residues Lys1238, Lys1250, and Lys1259 each participate in a glycyl lysine isopeptide (Lys-Gly) (interchain with G-Cter in SUMO2) cross-link. The interval 1245–1586 (LLKKKKGDPD…FTSEPPALPR (342 aa)) is disordered. Phosphothreonine is present on Thr1280. Residues Lys1311 and Lys1315 each participate in a glycyl lysine isopeptide (Lys-Gly) (interchain with G-Cter in SUMO2) cross-link. Basic and acidic residues-rich tracts occupy residues 1322–1332 (PWSDDESKSES) and 1346–1358 (SLLR…RPKY). Phosphoserine occurs at positions 1324, 1328, 1330, 1332, and 1346. Tyr1358 carries the post-translational modification Phosphotyrosine. Residues 1362–1379 (FSEEEEEDADDDDDNNDL) are compositionally biased toward acidic residues. Phosphoserine is present on Ser1363. A Glycyl lysine isopeptide (Lys-Gly) (interchain with G-Cter in SUMO2) cross-link involves residue Lys1385. Residue Ser1387 is modified to Phosphoserine. Thr1390 is modified (phosphothreonine). Position 1400 is a phosphoserine (Ser1400). A Phosphotyrosine modification is found at Tyr1408. Ser1411 is modified (phosphoserine). Residues 1417–1429 (ATPEKSSHDKKSQ) show a composition bias toward basic and acidic residues. Residue Lys1427 forms a Glycyl lysine isopeptide (Lys-Gly) (interchain with G-Cter in SUMO2) linkage. 3 positions are modified to phosphoserine: Ser1428, Ser1439, and Ser1441. A Glycyl lysine isopeptide (Lys-Gly) (interchain with G-Cter in SUMO2) cross-link involves residue Lys1443. The segment covering 1443 to 1453 (KSEDDSAKFDS) has biased composition (basic and acidic residues). A phosphoserine mark is found at Ser1448, Ser1453, and Ser1460. A Glycyl lysine isopeptide (Lys-Gly) (interchain with G-Cter in SUMO2) cross-link involves residue Lys1477. The interaction with PLSCR1 stretch occupies residues 1493–1499 (KAKRAPK). 3 positions are modified to phosphoserine: Ser1509, Ser1511, and Ser1513. Over residues 1526–1536 (GKGRGAKKRKA) the composition is skewed to basic residues. A phosphoserine mark is found at Ser1537 and Ser1539. A compositionally biased stretch (basic residues) spans 1550 to 1561 (KPSKTASKKPKK). Residue Thr1562 is modified to Phosphothreonine. A phosphoserine mark is found at Ser1563 and Ser1568. At Tyr1596 the chain carries Phosphotyrosine. Ser1600 bears the Phosphoserine mark.

The protein belongs to the type II topoisomerase family. In terms of assembly, homodimer. Interacts with PLSCR1 and KIAA1210. It depends on Mg(2+) as a cofactor. Mn(2+) is required as a cofactor. Requires Ca(2+) as cofactor.

The protein resides in the nucleus. It is found in the nucleolus. It localises to the nucleoplasm. The catalysed reaction is ATP-dependent breakage, passage and rejoining of double-stranded DNA.. Functionally, key decatenating enzyme that alters DNA topology by binding to two double-stranded DNA molecules, generating a double-stranded break in one of the strands, passing the intact strand through the broken strand, and religating the broken strand. The chain is DNA topoisomerase 2-beta (TOP2B) from Cricetulus longicaudatus (Long-tailed dwarf hamster).